We begin with the raw amino-acid sequence, 409 residues long: uncharacterized protein (409 aa).

10 consecutive transmembrane segments (helical) span residues 62–82 (FSLG…WVWI), 100–120 (LLLF…PEAF), 123–143 (MGLL…LFAL), 152–172 (ASFM…TFWI), 183–203 (VVLW…RYWV), 252–272 (GTPW…WIYF), 293–313 (AQYL…FTAV), 328–348 (YNFA…TMWM), 355–375 (VLPY…TLVP), and 376–396 (FVAN…VAVW).

The protein localises to the cell membrane. This is an uncharacterized protein from Rhizobium meliloti (strain 1021) (Ensifer meliloti).